Consider the following 176-residue polypeptide: Nascent polypeptide-associated complex subunit alpha (176 aa).

An NAC-A/B domain is found at proline 16–isoleucine 80. Positions alanine 83–alanine 110 are disordered. A compositionally biased stretch (basic and acidic residues) spans threonine 91 to alanine 110. The UBA domain occupies leucine 138–leucine 175.

Belongs to the NAC-alpha family. In terms of assembly, part of the nascent polypeptide-associated complex (NAC), consisting of EGD2 and EGD1. NAC associates with ribosomes via EGD1.

The protein resides in the cytoplasm. The protein localises to the nucleus. Component of the nascent polypeptide-associated complex (NAC), a dynamic component of the ribosomal exit tunnel, protecting the emerging polypeptides from interaction with other cytoplasmic proteins to ensure appropriate nascent protein targeting. The NAC complex also promotes mitochondrial protein import by enhancing productive ribosome interactions with the outer mitochondrial membrane and blocks the inappropriate interaction of ribosomes translating non-secretory nascent polypeptides with translocation sites in the membrane of the endoplasmic reticulum. EGD2 may also be involved in transcription regulation. This Scheffersomyces stipitis (strain ATCC 58785 / CBS 6054 / NBRC 10063 / NRRL Y-11545) (Yeast) protein is Nascent polypeptide-associated complex subunit alpha (EGD2).